The primary structure comprises 303 residues: Bifunctional protein FolD 2 (303 aa).

Residues 169 to 171, S194, and I235 each bind NADP(+); that span reads GRS.

It belongs to the tetrahydrofolate dehydrogenase/cyclohydrolase family. In terms of assembly, homodimer.

It catalyses the reaction (6R)-5,10-methylene-5,6,7,8-tetrahydrofolate + NADP(+) = (6R)-5,10-methenyltetrahydrofolate + NADPH. The enzyme catalyses (6R)-5,10-methenyltetrahydrofolate + H2O = (6R)-10-formyltetrahydrofolate + H(+). It participates in one-carbon metabolism; tetrahydrofolate interconversion. In terms of biological role, catalyzes the oxidation of 5,10-methylenetetrahydrofolate to 5,10-methenyltetrahydrofolate and then the hydrolysis of 5,10-methenyltetrahydrofolate to 10-formyltetrahydrofolate. This chain is Bifunctional protein FolD 2, found in Ectopseudomonas mendocina (strain ymp) (Pseudomonas mendocina).